The primary structure comprises 501 residues: uncharacterized protein (501 aa).

2 disordered regions span residues 179 to 404 and 480 to 501; these read EKTS…DETA and SDDTDDTDDTNNSCSSEVDDSD. Over residues 191–200 the composition is skewed to basic and acidic residues; it reads SRNESQDKSR. Over residues 201–214 the composition is skewed to basic residues; it reads DKSRKKVCNTHKNK. A compositionally biased stretch (basic and acidic residues) spans 215 to 226; that stretch reads KTLDNVKPDKNI. Low complexity predominate over residues 231–274; that stretch reads SSNKFTTNKPKSNKNSSDSDGSTKTTKSTRSTKSTKSSKSQKST. Residues 304–316 are compositionally biased toward basic and acidic residues; it reads NPKESINHKKNDS. Residues 333–352 are compositionally biased toward polar residues; the sequence is DSTNCRKSNRTTTRDVTNSD. Acidic residues predominate over residues 379–403; that stretch reads EQSDLTEDETEENVSEEDETEEDET.

This is an uncharacterized protein from Acanthamoeba polyphaga mimivirus (APMV).